The following is a 183-amino-acid chain: Copper metallothionein 2 (183 aa).

A cys-rich copper-binding 1 region spans residues 1 to 35 (MAFNPNPEKTTSCCSTSKAQDKCTCPKGKCECETC). A spacer B1 region spans residues 36–45 (PKSTKTPGSG). The segment at 46 to 79 (PCNCGVKEKVSTCGCNGSGAACTCPPGQCACDSC) is cys-rich copper-binding 2. The tract at residues 80-88 (PRKAKSVST) is spacer B2. The tract at residues 89–110 (CGCGGSAAACSCPPGKCACDSC) is cys-rich copper-binding 3. The spacer B3 stretch occupies residues 111–120 (PKQAQEKVSS). The segment at 121–142 (CACNGSGGACTCPPGKCSCSGC) is cys-rich copper-binding 4. The spacer B4 stretch occupies residues 143-156 (PAQAKENPADQPTT). The tract at residues 157 to 183 (CGCQGVGVACTCPPGQCACDGCPAKAK) is cys-rich copper-binding 5.

This sequence belongs to the metallothionein superfamily.

Its subcellular location is the cytoplasm. It localises to the cell cortex. Functionally, copper metallothionein that protects the cell against copper toxicity by tightly chelating copper ions. Required for antioxidant-mediated growth rescue in the presence of fluconazole. Acts as a critical factors for lung colonization and virulence. The polypeptide is Copper metallothionein 2 (Cryptococcus neoformans var. grubii serotype A (strain H99 / ATCC 208821 / CBS 10515 / FGSC 9487) (Filobasidiella neoformans var. grubii)).